The chain runs to 461 residues: Fumarate hydratase class II (461 aa).

Residues 97 to 99 (SGT), 127 to 130 (HPND), 137 to 139 (SSN), and T185 contribute to the substrate site. H186 (proton donor/acceptor) is an active-site residue. S316 is a catalytic residue. Residues S317 and 322-324 (KVN) each bind substrate.

The protein belongs to the class-II fumarase/aspartase family. Fumarase subfamily. As to quaternary structure, homotetramer.

It is found in the cytoplasm. It carries out the reaction (S)-malate = fumarate + H2O. It participates in carbohydrate metabolism; tricarboxylic acid cycle; (S)-malate from fumarate: step 1/1. In terms of biological role, involved in the TCA cycle. Catalyzes the stereospecific interconversion of fumarate to L-malate. This chain is Fumarate hydratase class II, found in Staphylococcus aureus (strain Mu50 / ATCC 700699).